The following is a 169-amino-acid chain: Glutathione peroxidase (169 aa).

U43 is an active-site residue. Residue U43 is a non-standard amino acid, selenocysteine.

Belongs to the glutathione peroxidase family.

The enzyme catalyses 2 glutathione + H2O2 = glutathione disulfide + 2 H2O. In Schistosoma mansoni (Blood fluke), this protein is Glutathione peroxidase (GPX1).